Here is a 328-residue protein sequence, read N- to C-terminus: Methionyl-tRNA formyltransferase (328 aa).

A (6S)-5,6,7,8-tetrahydrofolate-binding site is contributed by 110-113 (SLLP).

The protein belongs to the Fmt family.

It catalyses the reaction L-methionyl-tRNA(fMet) + (6R)-10-formyltetrahydrofolate = N-formyl-L-methionyl-tRNA(fMet) + (6S)-5,6,7,8-tetrahydrofolate + H(+). Its function is as follows. Attaches a formyl group to the free amino group of methionyl-tRNA(fMet). The formyl group appears to play a dual role in the initiator identity of N-formylmethionyl-tRNA by promoting its recognition by IF2 and preventing the misappropriation of this tRNA by the elongation apparatus. This is Methionyl-tRNA formyltransferase from Prochlorococcus marinus (strain MIT 9215).